The sequence spans 432 residues: Bouquet formation protein 4 (432 aa).

The segment at 1 to 21 (MTENEKSRSLPAERNPLYKDD) is disordered. The HTH APSES-type domain maps to 38-147 (EFPDGPATFV…SSTPSTYATP (110 aa)). Residues 73–94 (ATSMFRSAFPKATQEEEDLEMR) constitute a DNA-binding region (H-T-H motif). 2 stretches are compositionally biased toward low complexity: residues 139–152 (STPS…RPTA) and 163–172 (ESSTSATTTS). Disordered stretches follow at residues 139 to 283 (STPS…GKIR) and 364 to 384 (KSSI…FEEN). Positions 180–228 (RLAEHLENSKKTILQHDNKEEDKEIHSEENETKDEIKSEKKEPEIKKQE) are enriched in basic and acidic residues. The span at 229 to 241 (GGSSTEKVGQPSS) shows a compositional bias: polar residues.

As to quaternary structure, interacts with rap1.

It localises to the cytoplasm. The protein localises to the nucleus. It is found in the nucleus inner membrane. In terms of biological role, connects telomeres to the nuclear envelop (NE) during both vegetative growth and meiosis. This connection ensures clustering of telomeres to the spindle pole body (SPB) when cells enter meiotic prophase. The sequence is that of Bouquet formation protein 4 (bqt4) from Schizosaccharomyces pombe (strain 972 / ATCC 24843) (Fission yeast).